Reading from the N-terminus, the 177-residue chain is MLEKLIERVLFATRWLLAPLCIAMSLVLVVLGYVFMKELWHMLSHLDTISETDLVLSALGLVDLLFMAGLVLMVLLASYESFVSKLDKVDASEITWLKHTDFNALKLKVSLSIVAISAIFLLKRYMSLEDVLSSIPKDTPLSHNPIFWQVVIHLVFVCSALLAAVTNNIAFSQNKGH.

4 consecutive transmembrane segments (helical) span residues W15–F35, L54–V74, F102–L122, and P145–V165.

It belongs to the UPF0114 family.

The protein localises to the cell membrane. The polypeptide is UPF0114 protein HPAG1_0183 (Helicobacter pylori (strain HPAG1)).